Consider the following 188-residue polypeptide: Elongation factor P (188 aa).

It belongs to the elongation factor P family.

It localises to the cytoplasm. Its pathway is protein biosynthesis; polypeptide chain elongation. Functionally, involved in peptide bond synthesis. Stimulates efficient translation and peptide-bond synthesis on native or reconstituted 70S ribosomes in vitro. Probably functions indirectly by altering the affinity of the ribosome for aminoacyl-tRNA, thus increasing their reactivity as acceptors for peptidyl transferase. The protein is Elongation factor P of Rickettsia canadensis (strain McKiel).